The chain runs to 465 residues: 3-isopropylmalate dehydratase large subunit (465 aa).

Residues Cys-347, Cys-407, and Cys-410 each contribute to the [4Fe-4S] cluster site. The tract at residues 416 to 443 (DTLRPGERSASTSNRNFEGRQGPGGRTH) is disordered.

Belongs to the aconitase/IPM isomerase family. LeuC type 1 subfamily. In terms of assembly, heterodimer of LeuC and LeuD. [4Fe-4S] cluster is required as a cofactor.

The enzyme catalyses (2R,3S)-3-isopropylmalate = (2S)-2-isopropylmalate. Its pathway is amino-acid biosynthesis; L-leucine biosynthesis; L-leucine from 3-methyl-2-oxobutanoate: step 2/4. Its function is as follows. Catalyzes the isomerization between 2-isopropylmalate and 3-isopropylmalate, via the formation of 2-isopropylmaleate. This is 3-isopropylmalate dehydratase large subunit from Frankia alni (strain DSM 45986 / CECT 9034 / ACN14a).